A 201-amino-acid polypeptide reads, in one-letter code: Small ribosomal subunit protein uS4 (201 aa).

Residues 92–155 (ARLDNVVFRL…KSLEVIANSL (64 aa)) form the S4 RNA-binding domain.

The protein belongs to the universal ribosomal protein uS4 family. Part of the 30S ribosomal subunit. Contacts protein S5. The interaction surface between S4 and S5 is involved in control of translational fidelity.

Its function is as follows. One of the primary rRNA binding proteins, it binds directly to 16S rRNA where it nucleates assembly of the body of the 30S subunit. In terms of biological role, with S5 and S12 plays an important role in translational accuracy. The sequence is that of Small ribosomal subunit protein uS4 from Phocaeicola vulgatus (strain ATCC 8482 / DSM 1447 / JCM 5826 / CCUG 4940 / NBRC 14291 / NCTC 11154) (Bacteroides vulgatus).